A 152-amino-acid chain; its full sequence is Interleukin-3 (152 aa).

Positions 1–19 are cleaved as a signal peptide; sequence MSRLPVLLLLQLLVRPGLQ. 2 N-linked (GlcNAc...) asparagine glycosylation sites follow: Asn34 and Asn89. Cys35 and Cys103 are oxidised to a cystine.

It belongs to the IL-3 family. In terms of assembly, monomer. As to expression, activated T-cells, mast cells, natural killer cells.

Its subcellular location is the secreted. Functionally, granulocyte/macrophage colony-stimulating factors are cytokines that act in hematopoiesis by controlling the production, differentiation, and function of 2 related white cell populations of the blood, the granulocytes and the monocytes-macrophages. This CSF induces granulocytes, macrophages, mast cells, stem cells, erythroid cells, eosinophils and megakaryocytes. The polypeptide is Interleukin-3 (IL3) (Pan troglodytes (Chimpanzee)).